We begin with the raw amino-acid sequence, 393 residues long: Interleukin-1 receptor type 2 (393 aa).

The N-terminal stretch at 1 to 13 (MFRLYVLVMGVSA) is a signal peptide. Over 14–347 (FTLQPAAHTG…RTTVKEPPPT (334 aa)) the chain is Extracellular. 3 disulfide bridges follow: cysteine 28–cysteine 116, cysteine 50–cysteine 108, and cysteine 152–cysteine 207. Ig-like C2-type domains lie at 29–120 (PVRG…DKVS), 134–221 (PFIS…YNIT), and 237–342 (PVII…TTVK). 3 N-linked (GlcNAc...) asparagine glycosylation sites follow: asparagine 66, asparagine 72, and asparagine 112. Residues asparagine 219 and asparagine 277 are each glycosylated (N-linked (GlcNAc...) asparagine). An intrachain disulfide couples cysteine 258 to cysteine 326. The chain crosses the membrane as a helical span at residues 348-368 (FSWGIVLAPLALAFLVLGGIW). At 369–393 (MHRRCKHRTGKADGLTVLRPHHQDF) the chain is on the cytoplasmic side.

This sequence belongs to the interleukin-1 receptor family. As to quaternary structure, forms a non-signaling receptor complex consisting of IL1R2 and IL1RAP. A soluble form (sIL1R2) can also be produced by proteolytic cleavage at the cell surface (shedding) involving a metalloproteinase.

The protein resides in the secreted. It is found in the cell membrane. Its function is as follows. Non-signaling receptor for IL1A, IL1B and IL1RN. Reduces IL1B activities. Serves as a decoy receptor by competitive binding to IL1B and preventing its binding to IL1R1. Also modulates cellular response through non-signaling association with IL1RAP after binding to IL1B. IL1R2 (membrane and secreted forms) preferentially binds IL1B and poorly IL1A and IL1RN. The secreted IL1R2 recruits secreted IL1RAP with high affinity; this complex formation may be the dominant mechanism for neutralization of IL1B by secreted/soluble receptors. The sequence is that of Interleukin-1 receptor type 2 (IL1R2) from Chlorocebus aethiops (Green monkey).